The primary structure comprises 569 residues: MKQSQLLIPTLKEVPNDAEALSHQMMLRAGYIRQVTAGMYAYLPLAFRVLTNIETIIREEMEKINAVEMLMPAVLPASLWQESGRYETYGPNLFKFKNRHDSDFILAPTHEETFTMLVRDAIKSYKRLPLVMYQIQPKYRDEDRPRYGLLRGREFIMKDAYSFSLSDEDLDRIYNQMEQAYENIFDRIGLNYRAIVGDGGAMGGKDSKEFSAIAPVGEDTIVYSDSSDYAANLEMAKSLFVSKKSHAQLADLEKIATPGVHSIAELAEFLDVKPAALVKSMLYIADDQPVMVLVRGDHEVNETKLKNYLNADFLNPATPEDAQKYLGANFGSLGPVGVSEDVKILADQYVGDMVNVAVGADEDEHHYLNANLDRDFRVDAFADLREVQPGDLSPDGSGVLKFTKGIEIGHIFKLGTRYSDALGATVLDEGGRQKPVVMGSYGIGVSRLLSAIAEQQADDKGLVWPRNIAPFDIHLVPVNLKKDDQAQLTSELEEQLTAKGYRILTDDRKERPGVKFADSDLMGIPVRITIGKKAGEGIVEIKIRKTGETVEVIKDEVASTVEILFKDID.

Belongs to the class-II aminoacyl-tRNA synthetase family. ProS type 1 subfamily. In terms of assembly, homodimer.

It is found in the cytoplasm. It catalyses the reaction tRNA(Pro) + L-proline + ATP = L-prolyl-tRNA(Pro) + AMP + diphosphate. Its function is as follows. Catalyzes the attachment of proline to tRNA(Pro) in a two-step reaction: proline is first activated by ATP to form Pro-AMP and then transferred to the acceptor end of tRNA(Pro). As ProRS can inadvertently accommodate and process non-cognate amino acids such as alanine and cysteine, to avoid such errors it has two additional distinct editing activities against alanine. One activity is designated as 'pretransfer' editing and involves the tRNA(Pro)-independent hydrolysis of activated Ala-AMP. The other activity is designated 'posttransfer' editing and involves deacylation of mischarged Ala-tRNA(Pro). The misacylated Cys-tRNA(Pro) is not edited by ProRS. This Levilactobacillus brevis (strain ATCC 367 / BCRC 12310 / CIP 105137 / JCM 1170 / LMG 11437 / NCIMB 947 / NCTC 947) (Lactobacillus brevis) protein is Proline--tRNA ligase.